Here is a 311-residue protein sequence, read N- to C-terminus: Protoheme IX farnesyltransferase (311 aa).

Transmembrane regions (helical) follow at residues 32 to 52 (VMSL…VVVD), 53 to 73 (PLYG…AGAL), 98 to 118 (ISRG…VFLM), 120 to 140 (VLIN…YIVI), 153 to 173 (IVIG…AATG), 180 to 200 (FLLF…LCLF), 226 to 246 (ILVY…TGYA), 248 to 268 (IIYG…AYRL), and 285 to 305 (FFFS…EFLI).

The protein belongs to the UbiA prenyltransferase family. Protoheme IX farnesyltransferase subfamily.

The protein localises to the cell inner membrane. It carries out the reaction heme b + (2E,6E)-farnesyl diphosphate + H2O = Fe(II)-heme o + diphosphate. It participates in porphyrin-containing compound metabolism; heme O biosynthesis; heme O from protoheme: step 1/1. In terms of biological role, converts heme B (protoheme IX) to heme O by substitution of the vinyl group on carbon 2 of heme B porphyrin ring with a hydroxyethyl farnesyl side group. This chain is Protoheme IX farnesyltransferase, found in Bartonella bacilliformis (strain ATCC 35685 / KC583 / Herrer 020/F12,63).